The primary structure comprises 581 residues: Protein FAM83D (581 aa).

A DUF1669 region spans residues 1–297 (MALRYDGLDE…LYAQSKPISS (297 aa)). Positions 75–101 (PGEEGAAAGAEDSFGSSHDCSSGTYFP) are disordered. Polar residues predominate over residues 88–98 (FGSSHDCSSGT). Phosphoserine is present on Ser296. Residues 338-581 (TPRKVELGGE…REIMLYPSYQ (244 aa)) are required for interaction with KIF22 and function in chromosome congression. 2 disordered regions span residues 366-401 (EDYF…MSDV) and 426-503 (QTVV…GPPK). The span at 369 to 382 (FSSRKDRLEGRRVT) shows a compositional bias: basic and acidic residues. Residues 426-438 (QTVVPTTSATTQT) show a composition bias toward low complexity. Ser456 carries the post-translational modification Phosphoserine. Residues 462–488 (SVSRSSSLRSSSSLSSQGSVASSIGSQ) are compositionally biased toward low complexity. At Thr507 the chain carries Phosphothreonine.

It belongs to the FAM83 family. Interacts with FBXW7; promotes FBXW7 degradation. May interact with RAF1. Interacts with KIF22; recruits KIF22 to mitotic spindle microtubules. Interacts (via C-terminus) with DYNLL1. Interacts with HMMR. Directly interacts (via DUF1669) with CSNK1A1 and CSNK1A1L. Phosphorylated during mitosis.

The protein localises to the cytoplasm. It is found in the cytoskeleton. It localises to the spindle. Its subcellular location is the spindle pole. In terms of biological role, through the degradation of FBXW7, may act indirectly on the expression and downstream signaling of MTOR, JUN and MYC. May play also a role in cell proliferation through activation of the ERK1/ERK2 signaling cascade. May also be important for proper chromosome congression and alignment during mitosis through its interaction with KIF22. The protein is Protein FAM83D of Bos taurus (Bovine).